Here is a 550-residue protein sequence, read N- to C-terminus: Metal transporter Nramp4 (550 aa).

Residues 1–13 (MEEGAKIGREHEQ) show a composition bias toward basic and acidic residues. A disordered region spans residues 1–37 (MEEGAKIGREHEQQQQQHGRVNGSGRVAAVGGGSGGG). The segment covering 14–29 (QQQQHGRVNGSGRVAA) has biased composition (low complexity). The next 12 helical transmembrane spans lie at 72-92 (FLAH…PSNL), 105-125 (SLLW…SLAA), 151-171 (LWLL…LGTA), 177-197 (LLHI…FLIL), 207-227 (MEFT…MELG), 255-275 (VAMF…SLVL), 292-312 (FFLL…VAIV), 354-374 (VYGV…SYAG), 388-408 (IIYL…CSIG), 416-436 (IINI…IPLI), 457-477 (IAWI…CTSF), and 492-512 (AIIS…LIYL).

This sequence belongs to the NRAMP (TC 2.A.55) family.

Its subcellular location is the membrane. Probable metal transporter. The polypeptide is Metal transporter Nramp4 (NRAMP4) (Oryza sativa subsp. japonica (Rice)).